Here is a 238-residue protein sequence, read N- to C-terminus: MAEPIYRRVLVKLSGEYFAGPQDYGIDQATIDRVAGELIAARSLGIEIAVVIGGGNIFRGVEVSARGVSRTTGDTMGMLATVMNCLALAEALQRHGQKARTLAALMMPEVCELYTRAAAEQTLREGGIALLAAGTGNPYFTTDTAAVLRAAEIGAGAVLKATNVDGVYSADPKLDPNAKRFEKLTHSEALAGGYKVMDATAFALARETSLPIIVFSIAEPGSIGAVLSGAGRATVVAG.

12–15 (KLSG) serves as a coordination point for ATP. Gly54 is a binding site for UMP. Gly55 and Arg59 together coordinate ATP. UMP contacts are provided by residues Asp74 and 135–142 (TGNPYFTT). Positions 162, 163, 168, and 171 each coordinate ATP.

The protein belongs to the UMP kinase family. As to quaternary structure, homohexamer.

It localises to the cytoplasm. It catalyses the reaction UMP + ATP = UDP + ADP. It participates in pyrimidine metabolism; CTP biosynthesis via de novo pathway; UDP from UMP (UMPK route): step 1/1. With respect to regulation, inhibited by UTP. In terms of biological role, catalyzes the reversible phosphorylation of UMP to UDP. The sequence is that of Uridylate kinase from Rhodopseudomonas palustris (strain ATCC BAA-98 / CGA009).